Consider the following 322-residue polypeptide: PIH1 domain-containing protein 2 (322 aa).

It belongs to the PIH1 family.

This is PIH1 domain-containing protein 2 (pih1d2) from Danio rerio (Zebrafish).